The following is a 1316-amino-acid chain: DNA-directed RNA polymerase subunit beta' (1316 aa).

Zn(2+) contacts are provided by Cys60, Cys62, Cys75, and Cys78. Mg(2+)-binding residues include Asp535, Asp537, and Asp539. Zn(2+) is bound by residues Cys891, Cys968, Cys975, and Cys978.

The protein belongs to the RNA polymerase beta' chain family. In terms of assembly, the RNAP catalytic core consists of 2 alpha, 1 beta, 1 beta' and 1 omega subunit. When a sigma factor is associated with the core the holoenzyme is formed, which can initiate transcription. Mg(2+) serves as cofactor. Zn(2+) is required as a cofactor.

It catalyses the reaction RNA(n) + a ribonucleoside 5'-triphosphate = RNA(n+1) + diphosphate. Its function is as follows. DNA-dependent RNA polymerase catalyzes the transcription of DNA into RNA using the four ribonucleoside triphosphates as substrates. In Mycobacterium bovis (strain BCG / Tokyo 172 / ATCC 35737 / TMC 1019), this protein is DNA-directed RNA polymerase subunit beta'.